The chain runs to 308 residues: SAP30-binding protein (308 aa).

Residues 15-101 form a disordered region; that stretch reads AEDSEPESDG…EAEKRDPQEL (87 aa). Residues 16 to 26 are compositionally biased toward acidic residues; that stretch reads EDSEPESDGEA. Phosphoserine occurs at positions 18, 22, 43, and 52. Residues 57 to 78 are compositionally biased toward acidic residues; it reads DEDGYEEEEDENSRQSEDDDSE. Positions 79 to 99 are enriched in basic and acidic residues; that stretch reads TEKPEADDPKDNTEAEKRDPQ. K95 is covalently cross-linked (Glycyl lysine isopeptide (Lys-Gly) (interchain with G-Cter in SUMO2)). S113 bears the Phosphoserine mark. Residues K220, K304, and K305 each participate in a glycyl lysine isopeptide (Lys-Gly) (interchain with G-Cter in SUMO2) cross-link.

The protein belongs to the HCNGP family. In terms of assembly, interacts with histone deacetylase complex subunit SAP30.

Its subcellular location is the nucleus. Plays a role in transcriptional repression by promoting histone deacetylase activity, leading to deacetylation of histone H3. May be involved in the regulation of beta-2-microglobulin genes. In terms of biological role, (Microbial infection) Involved in transcriptional repression of HHV-1 genes TK and gC. The chain is SAP30-binding protein from Homo sapiens (Human).